The following is a 106-amino-acid chain: Thioredoxin-like protein YusE (106 aa).

Positions 1-101 (MKELQEHELD…LYELIKQKSS (101 aa)) constitute a Thioredoxin domain. Cysteines 26 and 29 form a disulfide.

This Bacillus subtilis (strain 168) protein is Thioredoxin-like protein YusE (yusE).